The following is a 148-amino-acid chain: NADPH-dependent 7-cyano-7-deazaguanine reductase (148 aa).

Residue C50 is the Thioimide intermediate of the active site. The active-site Proton donor is the D57. Substrate contacts are provided by residues 72–74 (VES) and 91–92 (HE).

The protein belongs to the GTP cyclohydrolase I family. QueF type 1 subfamily.

It localises to the cytoplasm. The catalysed reaction is 7-aminomethyl-7-carbaguanine + 2 NADP(+) = 7-cyano-7-deazaguanine + 2 NADPH + 3 H(+). It functions in the pathway tRNA modification; tRNA-queuosine biosynthesis. Functionally, catalyzes the NADPH-dependent reduction of 7-cyano-7-deazaguanine (preQ0) to 7-aminomethyl-7-deazaguanine (preQ1). The sequence is that of NADPH-dependent 7-cyano-7-deazaguanine reductase from Helicobacter pylori (strain P12).